Reading from the N-terminus, the 145-residue chain is Small t antigen (145 aa).

The J domain occupies 6–82 (RLTELLCLPV…PEESGYATFE (77 aa)). A disordered region spans residues 58–80 (EGLRADETLEDSDPEPEESGYAT). Residues 65–75 (TLEDSDPEPEE) show a composition bias toward acidic residues.

In terms of assembly, interacts with host PPP2R1A; the interaction inhibits PP2A activity.

The protein resides in the host cytoplasm. It localises to the host nucleus. Promotes efficient viral genome replication by accelerating both G1 and S phase progression of the cell cycle. The sequence is that of Small t antigen from Budgerigar fledgling disease virus (BFPyV).